Here is a 220-residue protein sequence, read N- to C-terminus: 7-cyano-7-deazaguanine synthase (220 aa).

Residue 10–20 (FSGGQDSTTCL) participates in ATP binding. Zn(2+)-binding residues include cysteine 186, cysteine 195, cysteine 198, and cysteine 201.

This sequence belongs to the QueC family. Homodimer. The cofactor is Zn(2+).

The enzyme catalyses 7-carboxy-7-deazaguanine + NH4(+) + ATP = 7-cyano-7-deazaguanine + ADP + phosphate + H2O + H(+). It functions in the pathway purine metabolism; 7-cyano-7-deazaguanine biosynthesis. In terms of biological role, catalyzes the ATP-dependent conversion of 7-carboxy-7-deazaguanine (CDG) to 7-cyano-7-deazaguanine (preQ(0)). The polypeptide is 7-cyano-7-deazaguanine synthase (Bacillus mycoides (strain KBAB4) (Bacillus weihenstephanensis)).